A 690-amino-acid chain; its full sequence is Serotransferrin-1 (690 aa).

A signal peptide spans 1–18; it reads MKLLLLSALLGCLATAYA. 2 consecutive Transferrin-like domains span residues 25–329 and 340–669; these read VKWC…SLKK and IKWC…SLRK. The cysteines at positions 28 and 50 are disulfide-linked. The Fe(3+) site is built by D74 and Y104. 3 cysteine pairs are disulfide-bonded: C127–C207, C172–C186, and C235–C249. The hydrogencarbonate site is built by T129, S134, G136, and W137. N169 is a glycosylation site (N-linked (GlcNAc...) asparagine). Y201 provides a ligand contact to Fe(3+). H257 contacts Fe(3+). 2 cysteine pairs are disulfide-bonded: C343–C379 and C353–C370. Positions 394 and 428 each coordinate Fe(3+). 7 disulfide bridges follow: C404/C681, C419/C642, C451/C529, C475/C670, C485/C499, C496/C512, and C569/C583. Residues T453, R457, A459, and G460 each contribute to the hydrogencarbonate site. Y523 contacts Fe(3+). H591 is a binding site for Fe(3+).

It belongs to the transferrin family. As to quaternary structure, monomer. In terms of tissue distribution, abundant in liver and serum with smaller amounts found in the stomach and kidney.

The protein localises to the secreted. Its function is as follows. Transferrins are iron binding transport proteins which can bind two Fe(3+) ions in association with the binding of an anion, usually bicarbonate. It is responsible for the transport of iron from sites of absorption and heme degradation to those of storage and utilization. Serum transferrin may also have a further role in stimulating cell proliferation. This chain is Serotransferrin-1 (tf1), found in Salmo salar (Atlantic salmon).